The chain runs to 572 residues: ATP-dependent lipid A-core flippase (572 aa).

5 consecutive transmembrane segments (helical) span residues Ile14–Leu34, Val55–Leu75, Ile148–Ile168, Met249–Ile269, and Ser272–Val292. The region spanning Phe22–Gln304 is the ABC transmembrane type-1 domain. Positions Ile338–Met571 constitute an ABC transporter domain. Gly370–Thr377 provides a ligand contact to ATP.

This sequence belongs to the ABC transporter superfamily. Lipid exporter (TC 3.A.1.106) family. In terms of assembly, homodimer.

It localises to the cell inner membrane. It carries out the reaction ATP + H2O + lipid A-core oligosaccharideSide 1 = ADP + phosphate + lipid A-core oligosaccharideSide 2.. Functionally, involved in lipopolysaccharide (LPS) biosynthesis. Translocates lipid A-core from the inner to the outer leaflet of the inner membrane. Transmembrane domains (TMD) form a pore in the inner membrane and the ATP-binding domain (NBD) is responsible for energy generation. The polypeptide is ATP-dependent lipid A-core flippase (Desulfotalea psychrophila (strain LSv54 / DSM 12343)).